A 257-amino-acid polypeptide reads, in one-letter code: Aspartate/glutamate leucyltransferase (257 aa).

The protein belongs to the R-transferase family. Bpt subfamily.

The protein localises to the cytoplasm. It catalyses the reaction N-terminal L-glutamyl-[protein] + L-leucyl-tRNA(Leu) = N-terminal L-leucyl-L-glutamyl-[protein] + tRNA(Leu) + H(+). It carries out the reaction N-terminal L-aspartyl-[protein] + L-leucyl-tRNA(Leu) = N-terminal L-leucyl-L-aspartyl-[protein] + tRNA(Leu) + H(+). Its function is as follows. Functions in the N-end rule pathway of protein degradation where it conjugates Leu from its aminoacyl-tRNA to the N-termini of proteins containing an N-terminal aspartate or glutamate. The protein is Aspartate/glutamate leucyltransferase of Nitrobacter hamburgensis (strain DSM 10229 / NCIMB 13809 / X14).